The sequence spans 507 residues: Probable cytosol aminopeptidase (507 aa).

Mn(2+) is bound by residues lysine 254 and aspartate 259. The active site involves lysine 266. Residues aspartate 277, aspartate 336, and glutamate 338 each contribute to the Mn(2+) site. Residue arginine 340 is part of the active site. The disordered stretch occupies residues 486–507; it reads PRKAQPKARSAKRSKPVSRTRA. The segment covering 489–507 has biased composition (basic residues); sequence AQPKARSAKRSKPVSRTRA.

It belongs to the peptidase M17 family. Mn(2+) is required as a cofactor.

It is found in the cytoplasm. The enzyme catalyses Release of an N-terminal amino acid, Xaa-|-Yaa-, in which Xaa is preferably Leu, but may be other amino acids including Pro although not Arg or Lys, and Yaa may be Pro. Amino acid amides and methyl esters are also readily hydrolyzed, but rates on arylamides are exceedingly low.. It carries out the reaction Release of an N-terminal amino acid, preferentially leucine, but not glutamic or aspartic acids.. Presumably involved in the processing and regular turnover of intracellular proteins. Catalyzes the removal of unsubstituted N-terminal amino acids from various peptides. This Polaromonas sp. (strain JS666 / ATCC BAA-500) protein is Probable cytosol aminopeptidase.